An 860-amino-acid chain; its full sequence is Mycobactin import ATP-binding/permease protein IrtA (860 aa).

The Cytoplasmic portion of the chain corresponds to 1–293; it reads MARGIQGVMM…GRLLAPLKTT (293 aa). The 110-residue stretch at 15-124 folds into the FAD-binding FR-type domain; that stretch reads ARDHQATVVS…LGSAGFSVPE (110 aa). Residues 70–73, 87–91, 97–98, and 238–240 each bind FAD; these read RAYT, DVVLH, AS, and TEG. The tract at residues 242-275 is disordered; the sequence is AMGTKRGDDDKTPEVNPAPRADKPEAPAPAAAGR. Residues 294-314 form a helical membrane-spanning segment; that stretch reads LIISGVLQAIITLVQLAPFVL. The 283-residue stretch at 295 to 577 folds into the ABC transmembrane type-1 domain; sequence IISGVLQAII…IAYGLGGIRG (283 aa). The Periplasmic portion of the chain corresponds to 315-335; that stretch reads LVELARLLLSGASSDRLWTLG. Residues 336–356 traverse the membrane as a helical segment; that stretch reads VVAISLLGTGSFLAAALTLWL. Topologically, residues 357–409 are cytoplasmic; the sequence is HLVDARFARDLRTGLLTKMSRLPLGWFTARGSGSIKQLVQDDTLSLHYLITHA. A helical transmembrane segment spans residues 410-430; the sequence is IPDAVAAVIAPVAVLVYLFVV. At 431–433 the chain is on the periplasmic side; that stretch reads DWR. The helical transmembrane segment at 434 to 454 threads the bilayer; it reads LALVMFVPVLIYLVLMTVMTI. Topologically, residues 455-525 are cytoplasmic; the sequence is QSGPKIAQSQ…KKSMMDLVTR (71 aa). Residues 526–546 form a helical membrane-spanning segment; sequence PGTFLWLIVAVGTPMITSGAM. Residues 547–550 lie on the Periplasmic side of the membrane; that stretch reads DPVD. A helical transmembrane segment spans residues 551 to 571; it reads ILPFLLLGTTFGVRLLGIAYG. At 572 to 860 the chain is on the cytoplasmic side; it reads LGGIRGGMLA…AAGPTGEAVR (289 aa). The 234-residue stretch at 609–842 folds into the ABC transporter domain; the sequence is VVFDNVTFGY…AGRYRQLWET (234 aa). 642-649 is a binding site for ATP; sequence GPSGSGKS.

The protein belongs to the ABC transporter superfamily. Siderophore-Fe(3+) uptake transporter (SIUT) (TC 3.A.1.21) family. In terms of assembly, forms a heterodimer with IrtB. FAD is required as a cofactor.

Its subcellular location is the cell inner membrane. Functionally, part of the ABC transporter complex IrtAB involved in the import of iron-bound mycobactin (Fe-MBT) and carboxymycobactin (Fe-cMBT). Has a preference for Fe-MBT over Fe-cMBT. Mycobactins are then reduced by the siderophore interaction domain to facilitate iron release in the bacterial cell. Transmembrane domains (TMD) form a pore in the membrane and the ATP-binding domain (NBD) is responsible for energy generation. This is Mycobactin import ATP-binding/permease protein IrtA from Mycolicibacterium smegmatis (strain ATCC 700084 / mc(2)155) (Mycobacterium smegmatis).